The chain runs to 777 residues: Mediator of RNA polymerase II transcription subunit 15 (777 aa).

Disordered regions lie at residues 120–139 (MNLP…HGIT) and 418–520 (SIPV…EEQQ). Residues 420–434 (PVMSSPSPVQQVQTP) show a composition bias toward low complexity. The segment covering 435–448 (QPMPPPPQPSPQPS) has biased composition (pro residues). Residues 449–471 (QPMSQPNSNVSSGPAPSPSSFMP) are compositionally biased toward low complexity. The span at 500–519 (TPGNPNSVMSPASNNQSEEQ) shows a compositional bias: polar residues.

This sequence belongs to the Mediator complex subunit 15 family. As to quaternary structure, component of the Mediator complex. Interacts with srebf1 and srebf2. Interacts with smad2, smad3 and smad4.

The protein resides in the cytoplasm. The protein localises to the nucleus. Functionally, component of the Mediator complex, a coactivator involved in the regulated transcription of nearly all RNA polymerase II-dependent genes. Mediator functions as a bridge to convey information from gene-specific regulatory proteins to the basal RNA polymerase II transcription machinery. Mediator is recruited to promoters by direct interactions with regulatory proteins and serves as a scaffold for the assembly of a functional preinitiation complex with RNA polymerase II and the general transcription factors. Required for cholesterol-dependent gene regulation. Positively regulates the Nodal signaling pathway. The chain is Mediator of RNA polymerase II transcription subunit 15 (med15) from Xenopus laevis (African clawed frog).